Here is a 234-residue protein sequence, read N- to C-terminus: CHD1 helical C-terminal domain containing protein 1 (234 aa).

The segment at 1-38 (MEASDGQADEREEPLEQGTNARSLERRSSTTPAKDSLV) is disordered. The segment at 44-145 (LDRDTFKICK…NNQTTKFLMA (102 aa)) is CHD1 helical C-terminal domain (CHCT). Residues 200–234 (LRARGPRRRGSKLPQEPKLKRRRIKEAPDTPETCL) are disordered.

The protein localises to the cytoplasm. It is found in the nucleus. Functionally, may play a role in regulation of apoptosis. The chain is CHD1 helical C-terminal domain containing protein 1 (CHCT1) from Bos taurus (Bovine).